A 306-amino-acid chain; its full sequence is Glutathione transport system permease protein GsiC (306 aa).

Residues Met1 to Arg8 are Cytoplasmic-facing. The chain crosses the membrane as a helical span at residues Leu9–Leu29. Residues Leu30–Thr102 are Periplasmic-facing. The region spanning Phe95–Val292 is the ABC transmembrane type-1 domain. The chain crosses the membrane as a helical span at residues Ile103 to Trp123. Topologically, residues Arg124 to Thr134 are cytoplasmic. A helical membrane pass occupies residues Leu135–Phe155. At Ser156–Asp168 the chain is on the periplasmic side. The chain crosses the membrane as a helical span at residues Ser169–Ala189. Residues Arg190–Met228 lie on the Cytoplasmic side of the membrane. A helical transmembrane segment spans residues Ile229–Val249. Topologically, residues Glu250 to Val278 are periplasmic. A helical transmembrane segment spans residues Leu279–Ile299. Over Asn300 to Lys306 the chain is Cytoplasmic.

This sequence belongs to the binding-protein-dependent transport system permease family. As to quaternary structure, the complex is composed of two ATP-binding proteins (GsiA), two transmembrane proteins (GsiC and GsiD) and a solute-binding protein (GsiB).

Its subcellular location is the cell inner membrane. Part of the ABC transporter complex GsiABCD involved in glutathione import. Probably responsible for the translocation of the substrate across the membrane. This chain is Glutathione transport system permease protein GsiC, found in Salmonella choleraesuis (strain SC-B67).